The sequence spans 334 residues: Glycerol-1-phosphate dehydrogenase [NAD(P)+] (334 aa).

NAD(+)-binding positions include 77–81 and 99–102; these read GKPID and TTAS. Asp-104 serves as a coordination point for substrate. Ser-108 is an NAD(+) binding site. Asp-147 serves as a coordination point for substrate. The Zn(2+) site is built by Asp-147 and His-225. Residue His-229 coordinates substrate. His-246 contacts Zn(2+).

The protein belongs to the glycerol-1-phosphate dehydrogenase family. Requires Zn(2+) as cofactor.

Its subcellular location is the cytoplasm. It carries out the reaction sn-glycerol 1-phosphate + NAD(+) = dihydroxyacetone phosphate + NADH + H(+). The catalysed reaction is sn-glycerol 1-phosphate + NADP(+) = dihydroxyacetone phosphate + NADPH + H(+). It participates in membrane lipid metabolism; glycerophospholipid metabolism. Its function is as follows. Catalyzes the NAD(P)H-dependent reduction of dihydroxyacetonephosphate (DHAP or glycerone phosphate) to glycerol 1-phosphate (G1P). The G1P thus generated is used as the glycerophosphate backbone of phospholipids in the cellular membranes of Archaea. The sequence is that of Glycerol-1-phosphate dehydrogenase [NAD(P)+] from Methanococcus vannielii (strain ATCC 35089 / DSM 1224 / JCM 13029 / OCM 148 / SB).